A 152-amino-acid polypeptide reads, in one-letter code: Toxin Res (152 aa).

It belongs to the MbcT/ParT/Res family. Homodimer. Forms a complex with cognate antitoxin Xre.

Functionally, toxic component of a type II toxin-antitoxin (TA) system. Expression in E.coli inhibits cell growth; bacteriostasis is neutralized by expression of cognate antitoxin Xre. Probably depletes intracellular NAD(+). The protein is Toxin Res of Yersinia enterocolitica serotype O:8 / biotype 1B (strain NCTC 13174 / 8081).